The chain runs to 226 residues: Transcription repressor OFP12 (226 aa).

A compositionally biased stretch (low complexity) spans 68–87 (SSTFTASTSTAANSSSSSAS). Residues 68-104 (SSTFTASTSTAANSSSSSASYDDSDNYGFAPDDDSPP) form a disordered region. In terms of domain architecture, OVATE spans 152–217 (VKHYVQSPDP…IRAFADILVS (66 aa)).

As to quaternary structure, interacts with KNAT1, KNAT2, KNAT3 and KNAT4. As to expression, expressed in roots, shoots, stems, flower buds and siliques.

It localises to the nucleus. Functionally, transcriptional repressor that regulates multiple aspects of plant growth and development through the regulation of BEL1-LIKE (BLH) and KNOX TALE (KNAT) homeodomain transcription factors. The polypeptide is Transcription repressor OFP12 (OFP12) (Arabidopsis thaliana (Mouse-ear cress)).